A 381-amino-acid polypeptide reads, in one-letter code: Major structural protein ORF14 (381 aa).

The stretch at 287–307 forms a coiled coil; that stretch reads RQFKEKLNQEKDEKKRSINKE.

The sequence is that of Major structural protein ORF14 from Helicobacter pylori (strain 35A).